The chain runs to 396 residues: Lipid-A-disaccharide synthase (396 aa).

The protein belongs to the LpxB family.

It carries out the reaction a lipid X + a UDP-2-N,3-O-bis[(3R)-3-hydroxyacyl]-alpha-D-glucosamine = a lipid A disaccharide + UDP + H(+). It functions in the pathway bacterial outer membrane biogenesis; LPS lipid A biosynthesis. Condensation of UDP-2,3-diacylglucosamine and 2,3-diacylglucosamine-1-phosphate to form lipid A disaccharide, a precursor of lipid A, a phosphorylated glycolipid that anchors the lipopolysaccharide to the outer membrane of the cell. In Acinetobacter baylyi (strain ATCC 33305 / BD413 / ADP1), this protein is Lipid-A-disaccharide synthase.